Reading from the N-terminus, the 164-residue chain is Phosphopantetheine adenylyltransferase (164 aa).

T10 lines the substrate pocket. ATP is bound by residues T10–F11 and H18. Substrate is bound by residues K42, L74, and R88. Residues G89–R91, E99, and Y124–T130 contribute to the ATP site.

Belongs to the bacterial CoaD family. Homohexamer. The cofactor is Mg(2+).

The protein resides in the cytoplasm. The enzyme catalyses (R)-4'-phosphopantetheine + ATP + H(+) = 3'-dephospho-CoA + diphosphate. It functions in the pathway cofactor biosynthesis; coenzyme A biosynthesis; CoA from (R)-pantothenate: step 4/5. Reversibly transfers an adenylyl group from ATP to 4'-phosphopantetheine, yielding dephospho-CoA (dPCoA) and pyrophosphate. This Tolumonas auensis (strain DSM 9187 / NBRC 110442 / TA 4) protein is Phosphopantetheine adenylyltransferase.